Reading from the N-terminus, the 1070-residue chain is Carbamoyl phosphate synthase large chain (1070 aa).

A carboxyphosphate synthetic domain region spans residues 1–401 (MPKRDDIKTI…ALLKAVRSLE (401 aa)). Residues Arg-129, Arg-169, Gly-175, Gly-176, Lys-208, Ile-210, Glu-215, Gly-241, Ile-242, His-243, Gln-284, and Glu-298 each contribute to the ATP site. The ATP-grasp 1 domain maps to 133-327 (RDLMNELGEP…IAKLAAKIAV (195 aa)). The Mg(2+) site is built by Gln-284, Glu-298, and Asn-300. 3 residues coordinate Mn(2+): Gln-284, Glu-298, and Asn-300. Positions 402 to 546 (IGADHLLLEE…YSTYEEENES (145 aa)) are oligomerization domain. Residues 547-929 (TRSAKESVIV…ALYKGFVASG (383 aa)) are carbamoyl phosphate synthetic domain. One can recognise an ATP-grasp 2 domain in the interval 671 to 861 (EKALEILQIP…MANVATRVIL (191 aa)). The ATP site is built by Arg-707, Arg-746, Val-748, Glu-752, Gly-777, Val-778, His-779, Ser-780, Gln-820, and Glu-832. Positions 820, 832, and 834 each coordinate Mg(2+). Residues Gln-820, Glu-832, and Asn-834 each contribute to the Mn(2+) site. The MGS-like domain maps to 930 to 1070 (TTMHDYGTVL…SEVKQPKARV (141 aa)). The tract at residues 930 to 1070 (TTMHDYGTVL…SEVKQPKARV (141 aa)) is allosteric domain.

Belongs to the CarB family. As to quaternary structure, composed of two chains; the small (or glutamine) chain promotes the hydrolysis of glutamine to ammonia, which is used by the large (or ammonia) chain to synthesize carbamoyl phosphate. Tetramer of heterodimers (alpha,beta)4. The cofactor is Mg(2+). Mn(2+) is required as a cofactor.

It catalyses the reaction hydrogencarbonate + L-glutamine + 2 ATP + H2O = carbamoyl phosphate + L-glutamate + 2 ADP + phosphate + 2 H(+). The catalysed reaction is hydrogencarbonate + NH4(+) + 2 ATP = carbamoyl phosphate + 2 ADP + phosphate + 2 H(+). It participates in amino-acid biosynthesis; L-arginine biosynthesis; carbamoyl phosphate from bicarbonate: step 1/1. Its pathway is pyrimidine metabolism; UMP biosynthesis via de novo pathway; (S)-dihydroorotate from bicarbonate: step 1/3. In terms of biological role, large subunit of the glutamine-dependent carbamoyl phosphate synthetase (CPSase). CPSase catalyzes the formation of carbamoyl phosphate from the ammonia moiety of glutamine, carbonate, and phosphate donated by ATP, constituting the first step of 2 biosynthetic pathways, one leading to arginine and/or urea and the other to pyrimidine nucleotides. The large subunit (synthetase) binds the substrates ammonia (free or transferred from glutamine from the small subunit), hydrogencarbonate and ATP and carries out an ATP-coupled ligase reaction, activating hydrogencarbonate by forming carboxy phosphate which reacts with ammonia to form carbamoyl phosphate. This is Carbamoyl phosphate synthase large chain from Listeria monocytogenes serotype 4b (strain F2365).